The chain runs to 225 residues: Uridylate kinase (225 aa).

9–10 (GS) contributes to the ATP binding site. G44 contributes to the UMP binding site. ATP-binding residues include G45 and R49. Residues D66 and 114–120 (THPGHTT) each bind UMP. Residues T140, N141, Y146, and D149 each coordinate ATP.

The protein belongs to the UMP kinase family. In terms of assembly, homohexamer.

The protein localises to the cytoplasm. It carries out the reaction UMP + ATP = UDP + ADP. The protein operates within pyrimidine metabolism; CTP biosynthesis via de novo pathway; UDP from UMP (UMPK route): step 1/1. With respect to regulation, inhibited by UTP. Its function is as follows. Catalyzes the reversible phosphorylation of UMP to UDP. In Thermococcus gammatolerans (strain DSM 15229 / JCM 11827 / EJ3), this protein is Uridylate kinase.